Consider the following 472-residue polypeptide: NADH-quinone oxidoreductase subunit N (472 aa).

14 helical membrane-spanning segments follow: residues 11–31 (AELS…FLPA), 43–63 (ILLT…LFGG), 67–87 (STPM…LVFL), 103–123 (GEFY…VSAG), 125–145 (FLLF…LVAF), 159–179 (FILS…MIYG), 200–220 (VLAL…VPFH), 234–254 (VSAY…MIIL), 265–285 (WSEI…LFAI), 293–313 (FMAF…LAGT), 318–338 (ASLV…FGVI), 362–384 (PKLT…FAGF), 401–421 (LIVF…LLIV), and 446–466 (LLVC…YQLL).

Belongs to the complex I subunit 2 family. As to quaternary structure, NDH-1 is composed of 14 different subunits. Subunits NuoA, H, J, K, L, M, N constitute the membrane sector of the complex.

Its subcellular location is the cell inner membrane. The catalysed reaction is a quinone + NADH + 5 H(+)(in) = a quinol + NAD(+) + 4 H(+)(out). In terms of biological role, NDH-1 shuttles electrons from NADH, via FMN and iron-sulfur (Fe-S) centers, to quinones in the respiratory chain. The immediate electron acceptor for the enzyme in this species is believed to be a menaquinone. Couples the redox reaction to proton translocation (for every two electrons transferred, four hydrogen ions are translocated across the cytoplasmic membrane), and thus conserves the redox energy in a proton gradient. The chain is NADH-quinone oxidoreductase subunit N from Phocaeicola vulgatus (strain ATCC 8482 / DSM 1447 / JCM 5826 / CCUG 4940 / NBRC 14291 / NCTC 11154) (Bacteroides vulgatus).